The sequence spans 337 residues: Cysteine synthase 3 (337 aa).

The residue at position 47 (Lys47) is an N6-(pyridoxal phosphate)lysine. Residues Asn78, 182 to 186 (GSSGT), and Ser270 each bind pyridoxal 5'-phosphate.

The protein belongs to the cysteine synthase/cystathionine beta-synthase family. Homodimer. It depends on pyridoxal 5'-phosphate as a cofactor.

The catalysed reaction is O-acetyl-L-serine + hydrogen sulfide = L-cysteine + acetate. It functions in the pathway amino-acid biosynthesis; L-cysteine biosynthesis; L-cysteine from L-serine: step 2/2. Its function is as follows. Primarily catalyzes the formation of cysteine and acetate from O-acetylserine and hydrogen sulfide. Can also catalyze the formation of cysteine and acetate from S-sulfocysteine and hydrogen sulfide and the formation of cyanoalanine and hydrogen sulfide from either S-sulfocysteine or O-acetylserine and hydrogen cyanide. This is Cysteine synthase 3 from Caenorhabditis elegans.